A 196-amino-acid polypeptide reads, in one-letter code: Acyl-homoserine-lactone synthase (196 aa).

This sequence belongs to the autoinducer synthase family.

The enzyme catalyses a fatty acyl-[ACP] + S-adenosyl-L-methionine = an N-acyl-L-homoserine lactone + S-methyl-5'-thioadenosine + holo-[ACP] + H(+). Required for the synthesis of a yet unknown N-aceyl-homoserine lactone (N-aceyl-HSL), an autoinducer molecule which binds to PhzR and thus regulates phenazine production. The polypeptide is Acyl-homoserine-lactone synthase (phzI) (Pseudomonas chlororaphis (Pseudomonas aureofaciens)).